The following is a 520-amino-acid chain: Cytosol aminopeptidase (520 aa).

The Zn(2+) site is built by L200, M201, K280, and D285. Positions 280, 285, 290, and 292 each coordinate substrate. Residue D285 participates in Mg(2+) binding. K292 is an active-site residue. Residues R301, D303, D362, and E364 each contribute to the Zn(2+) site. Residues D303 and D362 each coordinate substrate. Residues D362 and E364 each contribute to the Mg(2+) site. Residue R366 is part of the active site.

Belongs to the peptidase M17 family. As to quaternary structure, homohexamer. Zn(2+) is required as a cofactor. The cofactor is Mn(2+).

Its subcellular location is the cytoplasm. It carries out the reaction Release of an N-terminal amino acid, Xaa-|-Yaa-, in which Xaa is preferably Leu, but may be other amino acids including Pro although not Arg or Lys, and Yaa may be Pro. Amino acid amides and methyl esters are also readily hydrolyzed, but rates on arylamides are exceedingly low.. The catalysed reaction is an S-substituted L-cysteinylglycine + H2O = an S-substituted L-cysteine + glycine. It catalyses the reaction L-cysteinylglycine + H2O = L-cysteine + glycine. The enzyme catalyses S-benzyl-L-cysteinylglycine + H2O = S-benzyl-L-cysteine + glycine. It carries out the reaction Release of N-terminal proline from a peptide.. In terms of biological role, cytosolic metallopeptidase that catalyzes the removal of unsubstituted N-terminal hydrophobic amino acids from various peptides. The presence of Zn(2+) ions is essential for the peptidase activity, and the association with other cofactors can modulate the substrate spectificity of the enzyme. For instance, in the presence of Mn(2+), it displays a specific Cys-Gly hydrolyzing activity of Cys-Gly-S-conjugates. Involved in the metabolism of glutathione and in the degradation of glutathione S-conjugates, which may play a role in the control of the cell redox status. In Xenopus tropicalis (Western clawed frog), this protein is Cytosol aminopeptidase (lap3).